Here is a 121-residue protein sequence, read N- to C-terminus: MARIAGVDLPKKKRIEYGLTYIYGIGLFTSRKILDKVGISYNKRVHELSEDEAAAIRKEIQENYMVEGDLRKQVAMDIKALMDLGSFRGLRHRKGLPVRGQKTKTNARTRKGKRKTVGAKS.

The tract at residues 95–121 is disordered; sequence GLPVRGQKTKTNARTRKGKRKTVGAKS.

It belongs to the universal ribosomal protein uS13 family. Part of the 30S ribosomal subunit. Forms a loose heterodimer with protein S19. Forms two bridges to the 50S subunit in the 70S ribosome.

Located at the top of the head of the 30S subunit, it contacts several helices of the 16S rRNA. In the 70S ribosome it contacts the 23S rRNA (bridge B1a) and protein L5 of the 50S subunit (bridge B1b), connecting the 2 subunits; these bridges are implicated in subunit movement. Contacts the tRNAs in the A and P-sites. This is Small ribosomal subunit protein uS13 from Campylobacter jejuni subsp. jejuni serotype O:23/36 (strain 81-176).